The sequence spans 165 residues: Urease accessory protein UreE (165 aa).

It belongs to the UreE family.

It is found in the cytoplasm. Functionally, involved in urease metallocenter assembly. Binds nickel. Probably functions as a nickel donor during metallocenter assembly. The polypeptide is Urease accessory protein UreE (Micrococcus luteus (strain ATCC 4698 / DSM 20030 / JCM 1464 / CCM 169 / CCUG 5858 / IAM 1056 / NBRC 3333 / NCIMB 9278 / NCTC 2665 / VKM Ac-2230) (Micrococcus lysodeikticus)).